A 655-amino-acid chain; its full sequence is Hepatocyte growth factor activator serine protease (655 aa).

A signal peptide spans 1–35 (MGRWAWVPSPWPPPGLGPFLLLLLLLLLLPRGFQP). Positions 36-372 (QPGGNRTESP…RLEACESLTR (337 aa)) are cleaved as a propeptide — removed in mature form. 2 N-linked (GlcNAc...) asparagine glycosylation sites follow: Asn-40 and Asn-48. Residues 64-102 (TSETPATSAPEAEGPQSGGLPPPPRAVPSSSSPQAQALT) form a disordered region. The 48-residue stretch at 103–150 (EDGRPCRFPFRYGGRMLHACTSEGSAHRKWCATTHNYDRDRAWGYCVE) folds into the Fibronectin type-II domain. 19 cysteine pairs are disulfide-bonded: Cys-108–Cys-133, Cys-122–Cys-148, Cys-164–Cys-175, Cys-169–Cys-186, Cys-188–Cys-197, Cys-202–Cys-230, Cys-228–Cys-237, Cys-245–Cys-256, Cys-250–Cys-267, Cys-269–Cys-278, Cys-286–Cys-367, Cys-307–Cys-349, Cys-338–Cys-362, Cys-394–Cys-521, Cys-432–Cys-448, Cys-440–Cys-510, Cys-535–Cys-604, Cys-567–Cys-583, and Cys-594–Cys-622. An EGF-like 1 domain is found at 160–198 (ALDPCASGPCLNGGSCSNTQDPQSYHCSCPRAFTGKDCG). Residues 200 to 240 (EKCFDETRYEYLEGGDRWARVRQGHVEQCECFGGRTWCEGT) form the Fibronectin type-I domain. The EGF-like 2 domain occupies 241 to 279 (RHTACLSSPCLNGGTCHLIVATGTTVCACPPGFAGRLCN). A Kringle domain is found at 286 to 367 (CFLGNGTGYR…SWEYCRLEAC (82 aa)). The N-linked (GlcNAc...) asparagine glycan is linked to Asn-290. One can recognise a Peptidase S1 domain in the interval 408-646 (IIGGSSSLPG…YVDWINDRIR (239 aa)). The active-site Charge relay system is the His-447. 2 N-linked (GlcNAc...) asparagine glycosylation sites follow: Asn-468 and Asn-492. Asp-497 serves as the catalytic Charge relay system. Asn-546 carries N-linked (GlcNAc...) asparagine glycosylation. Ser-598 (charge relay system) is an active-site residue.

It belongs to the peptidase S1 family. Heterodimer of a short chain and a long chain linked by a disulfide bond. The active form of HGFAC presents in the serum is derived from the COOH-terminal region of the precursor by the cleavage of bonds between Arg-372 and Val-373 and Arg-407 and Ile-408. As to expression, liver.

The protein resides in the secreted. In terms of biological role, serine protease that hydrolyzes the inactive zymogen hepatocyte growth factor (HGFsc) to an activated disulfide-linked heterodimer, then initiating hepatocyte growth factor receptor signaling pathway. In Homo sapiens (Human), this protein is Hepatocyte growth factor activator serine protease.